The following is a 110-amino-acid chain: Ribonuclease P protein component 4 (110 aa).

Cys-65, Cys-68, Cys-94, and Cys-97 together coordinate Zn(2+).

The protein belongs to the eukaryotic/archaeal RNase P protein component 4 family. Consists of a catalytic RNA component and at least 4-5 protein subunits. Zn(2+) serves as cofactor.

The protein localises to the cytoplasm. It catalyses the reaction Endonucleolytic cleavage of RNA, removing 5'-extranucleotides from tRNA precursor.. In terms of biological role, part of ribonuclease P, a protein complex that generates mature tRNA molecules by cleaving their 5'-ends. The polypeptide is Ribonuclease P protein component 4 (Methanococcus maripaludis (strain C5 / ATCC BAA-1333)).